We begin with the raw amino-acid sequence, 3341 residues long: Genome polyprotein (3341 aa).

Composition is skewed to basic and acidic residues over residues 1-14 and 24-35; these read MKRKDLEARGKAPG and REGRRKDKDKGG. The tract at residues 1–57 is disordered; the sequence is MKRKDLEARGKAPGRDSSTPFWGREGRRKDKDKGGESPSNRQVTLKTPIQSGRRAGK. The Cytoplasmic segment spans residues 1–120; sequence MKRKDLEARG…LESRRTTGNP (120 aa). A compositionally biased stretch (polar residues) spans 37 to 50; sequence SPSNRQVTLKTPIQ. The segment at 55–97 is hydrophobic; homodimerization of capsid protein C; the sequence is AGKRQRVGLLGRLGVGWGSFLQEDIVQALIHMALVLHALFASI. The propeptide at 117-136 is ER anchor for the capsid protein C, removed in mature form by serine protease NS3; it reads TGNPMTLAFILGFLTVLCGC. Residues 121-141 form a helical membrane-spanning segment; the sequence is MTLAFILGFLTVLCGCVVIDM. The Extracellular portion of the chain corresponds to 142–245; sequence QVSTTRGTEI…AFKTIRENKT (104 aa). N-linked (GlcNAc...) asparagine; by host glycosylation is found at asparagine 157 and asparagine 243. A helical transmembrane segment spans residues 246–262; it reads IFIVALLCVAIAKRWPT. Residue tryptophan 263 is a topological domain, cytoplasmic. Residues 264 to 278 traverse the membrane as a helical segment; sequence VVILLAIGTWTTVKG. Residues 279–665 lie on the Extracellular side of the membrane; the sequence is EFVEPLYTLK…GVWQDLVGKF (387 aa). A glycan (N-linked (GlcNAc...) asparagine; by host) is linked at asparagine 339. Positions 371-384 are involved in fusion; that stretch reads NRGWGTGCFKWGIG. N-linked (GlcNAc...) asparagine; by host glycosylation is found at asparagine 399, asparagine 411, asparagine 575, and asparagine 611. Residues 666-686 form a helical membrane-spanning segment; sequence SVGAFFSNTALLVILVLAALI. Residues 687–689 lie on the Cytoplasmic side of the membrane; that stretch reads DKR. The helical transmembrane segment at 690 to 705 threads the bilayer; it reads IAFLLVLGGYFYYVRA. Topologically, residues 706 to 1138 are extracellular; the sequence is DLGCGIDTTR…AKTRTSTLTR (433 aa). N-linked (GlcNAc...) asparagine; by host glycosylation is found at asparagine 794, asparagine 896, asparagine 993, and asparagine 1027. The chain crosses the membrane as a helical span at residues 1139 to 1159; the sequence is LFLTILAMALFGLPNLFSSVG. Residues 1160–1178 lie on the Cytoplasmic side of the membrane; it reads LSAWVLLVASSSAQPQDLS. The helical transmembrane segment at 1179–1199 threads the bilayer; the sequence is MNLWIVLQTGSSAVLLLGYMI. Over 1200–1204 the chain is Lumenal; that stretch reads RRKLA. A helical membrane pass occupies residues 1205 to 1225; it reads MVLGVHHLVTLMCVQFLFSAV. At 1226–1231 the chain is on the cytoplasmic side; the sequence is DRYQKY. Residues 1232-1252 traverse the membrane as a helical segment; it reads LYGLLELMASVVLLSAYKSVL. Residues 1253–1261 are Lumenal-facing; it reads QALPPEVLC. The chain crosses the membrane as a helical span at residues 1262 to 1282; that stretch reads FSLVMGWKTALSLATVVFLIF. Over 1283-1303 the chain is Cytoplasmic; the sequence is SLNAMYKYACQYHNPRNGYRD. Residues 1304-1324 form a helical membrane-spanning segment; that stretch reads SGANLWFWTVSLASAGGIWAA. Residues 1325 to 1326 lie on the Lumenal side of the membrane; sequence EK. Residues 1327–1347 traverse the membrane as a helical segment; the sequence is AHQPTVAAVLAFTMVVLFLYM. At 1348–1403 the chain is on the cytoplasmic side; sequence EQTNVSMELEFISAGETPEGVSTENDDGINIPDLKGRYGEDGIVVGAASSSGYLPE. Residues 1404–1424 constitute an intramembrane region (helical); it reads LVFVFLLGFAVTSTSYFLGAL. Over 1425–2089 the chain is Cytoplasmic; sequence YLLIATSTNL…TERSLTVVMA (665 aa). A Peptidase S7 domain is found at 1452 to 1630; it reads SDDLLGLGGP…KPTDVTESLN (179 aa). Active-site charge relay system; for serine protease NS3 activity residues include histidine 1506, aspartate 1530, and serine 1589. One can recognise a Helicase ATP-binding domain in the interval 1627 to 1780; it reads ESLNCDSTRR…SNYAISDQSI (154 aa). Position 1640 to 1647 (1640 to 1647) interacts with ATP; that stretch reads WHPGKGKT. The DECH box signature appears at 1729 to 1732; the sequence is DECH. Residues 1793–1947 enclose the Helicase C-terminal domain; it reads NVQKSVGAKK…TFMLEEAAYS (155 aa). The helical transmembrane segment at 2090–2110 threads the bilayer; sequence FVLGVSIMLSCFIAVWALCFL. The Lumenal portion of the chain corresponds to 2111–2145; sequence FSLFRPKKATYEQMPSSDPLSGGVLVSTPSVLYCM. Residues 2146-2166 traverse the membrane as a helical segment; sequence GVPLGFCVVITLAMFLVYPVL. Topologically, residues 2167-2178 are cytoplasmic; sequence YKSIGNRSYMDS. The chain crosses the membrane as a helical span at residues 2179–2199; that stretch reads DLVKWVILGSCLICGVLAWEM. At 2200–2242 the chain is on the lumenal side; sequence RMFPNIRSDLMELVKAVKEPEEVVNSGPSFPSWEIAQGKGATM. A helical transmembrane segment spans residues 2243–2263; sequence LDSLQVFFFITVLSTKFLYWF. Over 2264–2302 the chain is Cytoplasmic; sequence QENWTARMYAMKHPEMVSSIGGFRFDEIPFRAVLPSGFA. Residues 2303-2323 constitute an intramembrane region (helical); that stretch reads IVAIASLPSVVVGLLAAGVFM. Over 2324–2366 the chain is Cytoplasmic; that stretch reads AIMYCQNKWNATPKILTALDARDQRHDRPTEITSRVPLENTRS. Residues 2367-2387 traverse the membrane as a helical segment; the sequence is IMYAFCLIFSLFWAFCTRSPG. The Lumenal portion of the chain corresponds to 2388–2412; the sequence is DFLRGSLVVGASMWQILHPRSKIHD. The helical transmembrane segment at 2413-2433 threads the bilayer; sequence VMDFGSMVSAIGLLEMNYLFY. Residues 2434–3341 are Cytoplasmic-facing; the sequence is RFMHIAARAL…SRYRRGNDVI (908 aa). Residues 2454-2706 enclose the mRNA cap 0-1 NS5-type MT domain; sequence ALEKSTTIGL…SPVLPKGTRA (253 aa). Position 2497 (serine 2497) interacts with S-adenosyl-L-methionine. Residue lysine 2509 is the For 2'-O-MTase activity of the active site. Residues glycine 2527, tryptophan 2528, threonine 2545, isoleucine 2546, aspartate 2572, and valine 2573 each coordinate S-adenosyl-L-methionine. Aspartate 2587 acts as the For 2'-O-MTase activity in catalysis. Position 2588 (isoleucine 2588) interacts with S-adenosyl-L-methionine. Active-site for 2'-O-MTase activity residues include lysine 2624 and glutamate 2660. Tyrosine 2662 contacts S-adenosyl-L-methionine. Residues glutamate 2881, histidine 2885, cysteine 2890, and cysteine 2893 each coordinate Zn(2+). A RdRp catalytic domain is found at 2970 to 3117; that stretch reads KYLIADDIAG…STDNRDFSSA (148 aa). The Zn(2+) site is built by histidine 3152, cysteine 3168, and cysteine 3287.

The protein in the N-terminal section; belongs to the class I-like SAM-binding methyltransferase superfamily. mRNA cap 0-1 NS5-type methyltransferase family. In terms of assembly, homodimer. As to quaternary structure, forms heterodimers with envelope protein E in the endoplasmic reticulum and Golgi. Homodimer; in the endoplasmic reticulum and Golgi. In terms of assembly, forms homodimers as well as homohexamers. NS1 may interact with NS4A. As to quaternary structure, forms a heterodimer with serine protease NS3. May form homooligomers. Forms a heterodimer with NS2B. Interacts with NS4B. Interacts with unphosphorylated RNA-directed RNA polymerase NS5; this interaction stimulates RNA-directed RNA polymerase NS5 guanylyltransferase activity. In terms of assembly, interacts with serine protease NS3. As to quaternary structure, interacts with host STAT2; this interaction inhibits the phosphorylation of the latter, and, when all viral proteins are present (polyprotein), targets STAT2 for degradation. Post-translationally, genome polyprotein: Specific enzymatic cleavages in vivo yield mature proteins. Cleavages in the lumen of endoplasmic reticulum are performed by host signal peptidase, whereas cleavages in the cytoplasmic side are performed by serine protease NS3. Signal cleavage at the 2K-4B site requires a prior NS3 protease-mediated cleavage at the 4A-2K site. In terms of processing, cleaved in post-Golgi vesicles by a host furin, releasing the mature small envelope protein M, and peptide pr. This cleavage is incomplete as up to 30% of viral particles still carry uncleaved prM. N-glycosylated. Post-translationally, N-glycosylated. The excreted form is glycosylated and this is required for efficient secretion of the protein from infected cells. In terms of processing, phosphorylated on serines residues. This phosphorylation may trigger NS5 nuclear localization.

Its subcellular location is the virion. It is found in the host nucleus. The protein resides in the secreted. It localises to the virion membrane. The protein localises to the host endoplasmic reticulum membrane. The enzyme catalyses Selective hydrolysis of -Xaa-Xaa-|-Yaa- bonds in which each of the Xaa can be either Arg or Lys and Yaa can be either Ser or Ala.. It catalyses the reaction RNA(n) + a ribonucleoside 5'-triphosphate = RNA(n+1) + diphosphate. The catalysed reaction is a ribonucleoside 5'-triphosphate + H2O = a ribonucleoside 5'-diphosphate + phosphate + H(+). It carries out the reaction ATP + H2O = ADP + phosphate + H(+). The enzyme catalyses a 5'-end (5'-triphosphoguanosine)-ribonucleoside in mRNA + S-adenosyl-L-methionine = a 5'-end (N(7)-methyl 5'-triphosphoguanosine)-ribonucleoside in mRNA + S-adenosyl-L-homocysteine. It catalyses the reaction a 5'-end (N(7)-methyl 5'-triphosphoguanosine)-ribonucleoside in mRNA + S-adenosyl-L-methionine = a 5'-end (N(7)-methyl 5'-triphosphoguanosine)-(2'-O-methyl-ribonucleoside) in mRNA + S-adenosyl-L-homocysteine + H(+). In terms of biological role, plays a role in virus budding by binding to the cell membrane and gathering the viral RNA into a nucleocapsid that forms the core of a mature virus particle. During virus entry, may induce genome penetration into the host cytoplasm after hemifusion induced by the surface proteins. Can migrate to the cell nucleus where it modulates host functions. Its function is as follows. Prevents premature fusion activity of envelope proteins in trans-Golgi by binding to envelope protein E at pH6.0. After virion release in extracellular space, gets dissociated from E dimers. Acts as a chaperone for envelope protein E during intracellular virion assembly by masking and inactivating envelope protein E fusion peptide. prM is the only viral peptide matured by host furin in the trans-Golgi network probably to avoid catastrophic activation of the viral fusion activity in acidic Golgi compartment prior to virion release. prM-E cleavage is inefficient, and many virions are only partially matured. These uncleaved prM would play a role in immune evasion. Functionally, may play a role in virus budding. Exerts cytotoxic effects by activating a mitochondrial apoptotic pathway through M ectodomain. May display a viroporin activity. In terms of biological role, binds to host cell surface receptor and mediates fusion between viral and cellular membranes. Envelope protein is synthesized in the endoplasmic reticulum in the form of heterodimer with protein prM. They play a role in virion budding in the ER, and the newly formed immature particle is covered with 60 spikes composed of heterodimer between precursor prM and envelope protein E. The virion is transported to the Golgi apparatus where the low pH causes dissociation of PrM-E heterodimers and formation of E homodimers. prM-E cleavage is inefficient, and many virions are only partially matured. These uncleaved prM would play a role in immune evasion. Its function is as follows. Involved in immune evasion, pathogenesis and viral replication. Once cleaved off the polyprotein, is targeted to three destinations: the viral replication cycle, the plasma membrane and the extracellular compartment. May play a role in viral genome replication. Assist membrane bending and envelopment of genomic RNA at the endoplasmic reticulum. Excreted as a hexameric lipoparticle that plays a role against host immune response. Component of the viral RNA replication complex that functions in virion assembly and antagonizes the host immune response. Functionally, required cofactor for the serine protease function of NS3. May have membrane-destabilizing activity and form viroporins. In terms of biological role, displays three enzymatic activities: serine protease, NTPase and RNA helicase. NS3 serine protease, in association with NS2B, performs its autocleavage and cleaves the polyprotein at dibasic sites in the cytoplasm: C-prM, NS2A-NS2B, NS2B-NS3, NS3-NS4A, NS4A-2K and NS4B-NS5. NS3 RNA helicase binds RNA and unwinds dsRNA in the 3' to 5' direction. Its function is as follows. Regulates the ATPase activity of the NS3 helicase activity. NS4A allows NS3 helicase to conserve energy during unwinding. Functions as a signal peptide for NS4B and is required for the interferon antagonism activity of the latter. Functionally, inhibits interferon (IFN)-induced host STAT1 phosphorylation and nuclear translocation, thereby preventing the establishment of a cellular antiviral state by blocking the IFN-alpha/beta pathway. In terms of biological role, replicates the viral (+) and (-) RNA genome, and performs the capping of genomes in the cytoplasm. NS5 methylates viral RNA cap at guanine N-7 and ribose 2'-O positions. Besides its role in RNA genome replication, also prevents the establishment of cellular antiviral state by blocking the interferon-alpha/beta (IFN-alpha/beta) signaling pathway. Inhibits host TYK2 and STAT2 phosphorylation, thereby preventing activation of JAK-STAT signaling pathway. This chain is Genome polyprotein, found in Aedes (CFA flavivirus).